The following is a 563-amino-acid chain: MTEQKLSDNERLKRESNFLRGTIADDLQDRITGGFTADNFQLIRFHGMYQQDDRDIRAERAKQKLEPLHNVMLRARMPGGIITPTQWLAIDKFAEESSLYGSIRLTTRQTFQFHGVLKPNIKLMHQTLNSIGIDSIATAGDVNRNVLCTTNPIESELHQEAYEWAKKISEHLLPKTRAYAEIWLDGEKVEGGDEEPILGSNYLPRKFKTTVVIPPQNDVDVHANDLNFIAIADNGKLVGFNVLVGGGLAMTHGDKTTYPRRADDFGFIPLVNTLEVAAAVVTTQRDWGNRSNRKNAKTKYTLDRVGVDVFKAEVEKRAGITFEASRPYEFTDRGDRIGWVEGIDGKHHLALFIENGRLLDTPGKPLKTGVAEIAKIHKGDFRMTANQNLIVAGVPAADKNKIEKIARDHGLIDDGVSEQRKNSMACVAFPTCPLAMAEAERFLPDFVTDVEGVLAKHGLAEDDNIILRVTGCANGCGRAMLAEIGLVGKAPGRYNVHLGGNRNGTRVPKMYRENITVPQIMDEIDQLVGRWANEREDGEDFGDFTVRTGIIEPVLVSKRDFYA.

Residues Cys-426, Cys-432, Cys-472, and Cys-476 each coordinate [4Fe-4S] cluster. Position 476 (Cys-476) interacts with siroheme.

Belongs to the nitrite and sulfite reductase 4Fe-4S domain family. In terms of assembly, alpha(8)-beta(8). The alpha component is a flavoprotein, the beta component is a hemoprotein. It depends on siroheme as a cofactor. Requires [4Fe-4S] cluster as cofactor.

It carries out the reaction hydrogen sulfide + 3 NADP(+) + 3 H2O = sulfite + 3 NADPH + 4 H(+). It participates in sulfur metabolism; hydrogen sulfide biosynthesis; hydrogen sulfide from sulfite (NADPH route): step 1/1. In terms of biological role, component of the sulfite reductase complex that catalyzes the 6-electron reduction of sulfite to sulfide. This is one of several activities required for the biosynthesis of L-cysteine from sulfate. The protein is Sulfite reductase [NADPH] hemoprotein beta-component of Photobacterium profundum (strain SS9).